Here is a 450-residue protein sequence, read N- to C-terminus: Glucose-6-phosphate isomerase (450 aa).

T39 bears the Phosphothreonine mark. Residue E291 is the Proton donor of the active site. Active-site residues include H312 and K426.

It belongs to the GPI family.

It is found in the cytoplasm. The enzyme catalyses alpha-D-glucose 6-phosphate = beta-D-fructose 6-phosphate. The protein operates within carbohydrate biosynthesis; gluconeogenesis. Its pathway is carbohydrate degradation; glycolysis; D-glyceraldehyde 3-phosphate and glycerone phosphate from D-glucose: step 2/4. Its function is as follows. Catalyzes the reversible isomerization of glucose-6-phosphate to fructose-6-phosphate. In Bacillus cereus (strain ATCC 10987 / NRS 248), this protein is Glucose-6-phosphate isomerase.